Here is a 462-residue protein sequence, read N- to C-terminus: Glycine--tRNA ligase (462 aa).

Positions 99 and 174 each coordinate substrate. Residues 206–208, 216–221, 290–291, and 334–337 contribute to the ATP site; these read RNE, FRTREF, EL, and GADR. 221-225 serves as a coordination point for substrate; the sequence is FEQME. 330-334 contributes to the substrate binding site; that stretch reads EPSLG.

It belongs to the class-II aminoacyl-tRNA synthetase family. Homodimer.

It is found in the cytoplasm. It catalyses the reaction tRNA(Gly) + glycine + ATP = glycyl-tRNA(Gly) + AMP + diphosphate. In terms of biological role, catalyzes the attachment of glycine to tRNA(Gly). The sequence is that of Glycine--tRNA ligase from Macrococcus caseolyticus (strain JCSC5402) (Macrococcoides caseolyticum).